The primary structure comprises 112 residues: Large ribosomal subunit protein eL30 (112 aa).

It belongs to the eukaryotic ribosomal protein eL30 family.

This is Large ribosomal subunit protein eL30 (RPL30) from Euphorbia esula (Leafy spurge).